The chain runs to 555 residues: CTP synthase (555 aa).

The amidoligase domain stretch occupies residues 1–265; sequence MTRYIFITGG…GNRVCEKLNI (265 aa). Residue S13 coordinates CTP. S13 is a UTP binding site. Residues 14–19 and D71 contribute to the ATP site; that span reads SLGKGI. Mg(2+) is bound by residues D71 and E139. Residues 146 to 148, 186 to 191, and K222 each bind CTP; these read DIE and KTKPTQ. UTP contacts are provided by residues 186-191 and K222; that span reads KTKPTQ. The region spanning 290–541 is the Glutamine amidotransferase type-1 domain; the sequence is TVAVVGKYVD…IKAGLAAKEA (252 aa). G351 contributes to the L-glutamine binding site. C378 (nucleophile; for glutamine hydrolysis) is an active-site residue. L-glutamine is bound by residues 379 to 382, E402, and R469; that span reads LGMQ. Active-site residues include H514 and E516.

Belongs to the CTP synthase family. As to quaternary structure, homotetramer.

The catalysed reaction is UTP + L-glutamine + ATP + H2O = CTP + L-glutamate + ADP + phosphate + 2 H(+). The enzyme catalyses L-glutamine + H2O = L-glutamate + NH4(+). It carries out the reaction UTP + NH4(+) + ATP = CTP + ADP + phosphate + 2 H(+). It functions in the pathway pyrimidine metabolism; CTP biosynthesis via de novo pathway; CTP from UDP: step 2/2. With respect to regulation, allosterically activated by GTP, when glutamine is the substrate; GTP has no effect on the reaction when ammonia is the substrate. The allosteric effector GTP functions by stabilizing the protein conformation that binds the tetrahedral intermediate(s) formed during glutamine hydrolysis. Inhibited by the product CTP, via allosteric rather than competitive inhibition. Functionally, catalyzes the ATP-dependent amination of UTP to CTP with either L-glutamine or ammonia as the source of nitrogen. Regulates intracellular CTP levels through interactions with the four ribonucleotide triphosphates. This Coxiella burnetii (strain RSA 331 / Henzerling II) protein is CTP synthase.